The chain runs to 158 residues: 6,7-dimethyl-8-ribityllumazine synthase (158 aa).

5-amino-6-(D-ribitylamino)uracil-binding positions include Phe24, 58 to 60 (AFE), and 82 to 84 (AVI). Residue 87 to 88 (GT) coordinates (2S)-2-hydroxy-3-oxobutyl phosphate. His90 serves as the catalytic Proton donor. Phe115 provides a ligand contact to 5-amino-6-(D-ribitylamino)uracil. Arg129 provides a ligand contact to (2S)-2-hydroxy-3-oxobutyl phosphate.

This sequence belongs to the DMRL synthase family. Forms an icosahedral capsid composed of 60 subunits, arranged as a dodecamer of pentamers.

The enzyme catalyses (2S)-2-hydroxy-3-oxobutyl phosphate + 5-amino-6-(D-ribitylamino)uracil = 6,7-dimethyl-8-(1-D-ribityl)lumazine + phosphate + 2 H2O + H(+). It functions in the pathway cofactor biosynthesis; riboflavin biosynthesis; riboflavin from 2-hydroxy-3-oxobutyl phosphate and 5-amino-6-(D-ribitylamino)uracil: step 1/2. In terms of biological role, catalyzes the formation of 6,7-dimethyl-8-ribityllumazine by condensation of 5-amino-6-(D-ribitylamino)uracil with 3,4-dihydroxy-2-butanone 4-phosphate. This is the penultimate step in the biosynthesis of riboflavin. In Pseudomonas paraeruginosa (strain DSM 24068 / PA7) (Pseudomonas aeruginosa (strain PA7)), this protein is 6,7-dimethyl-8-ribityllumazine synthase.